Here is a 149-residue protein sequence, read N- to C-terminus: Oocyte-expressed protein (149 aa).

Residues 49–110 (PLVFYLEAWL…RVQNRVKSVL (62 aa)) enclose the KH; atypical domain.

It belongs to the KHDC1 family. In terms of assembly, component of the subcortical maternal complex (SCMC), at least composed of NLRP5, KHDC3, OOEP, and TLE6. Within the complex, interacts with NLRP5, KHDC3 and TLE6. As part of the SCMC interacts with the SCMC-associated protein NLRP4F. The SCMC may facilitate translocation of its components between the nuclear and cytoplasmic compartments. Forms a scaffold complex with KHDC3/FILIA, and interacts with BLM and TRIM25 at DNA replication forks.

The protein localises to the cytoplasm. It is found in the nucleus. Functionally, component of the subcortical maternal complex (SCMC), a multiprotein complex that plays a key role in early embryonic development. The SCMC complex is a structural constituent of cytoplasmic lattices, which consist in fibrous structures found in the cytoplasm of oocytes and preimplantation embryos. They are required to store maternal proteins critical for embryonic development, such as proteins that control epigenetic reprogramming of the preimplantation embryo, and prevent their degradation or activation. As part of the OOEP-KHDC3 scaffold, recruits BLM and TRIM25 to DNA replication forks, thereby promoting the ubiquitination of BLM by TRIM25, enhancing BLM retainment at replication forks and therefore promoting stalled replication fork restart. Positively regulates the homologous recombination-mediated DNA double-strand break (DSB) repair pathway by regulating ATM activation and RAD51 recruitment to DSBs in oocytes. Thereby contributes to oocyte survival and the resumption and completion of meiosis. The polypeptide is Oocyte-expressed protein (OOEP) (Canis lupus familiaris (Dog)).